Here is a 216-residue protein sequence, read N- to C-terminus: Acyl-homoserine-lactone synthase (216 aa).

It belongs to the autoinducer synthase family.

The catalysed reaction is a fatty acyl-[ACP] + S-adenosyl-L-methionine = an N-acyl-L-homoserine lactone + S-methyl-5'-thioadenosine + holo-[ACP] + H(+). In terms of biological role, required for the synthesis of OHHL (N-(3-oxohexanoyl)-L-homoserine lactone), an autoinducer molecule which binds to a yet uncharacterized transcriptional regulator. The sequence is that of Acyl-homoserine-lactone synthase (eagI) from Enterobacter agglomerans (Erwinia herbicola).